The following is a 548-amino-acid chain: uncharacterized protein (548 aa).

A DhaL domain is found at 8–200; sequence KLFADMIIQG…LLCVYEGFLK (193 aa).

This is an uncharacterized protein from Staphylococcus aureus (strain MRSA252).